The following is a 376-amino-acid chain: Alpha-2,8-sialyltransferase 8E (376 aa).

Topologically, residues 1–17 (MRYADPSANRDLLGNRT) are cytoplasmic. Residues 18–38 (LLFIFICAFALVTLLQQILYG) form a helical; Signal-anchor for type II membrane protein membrane-spanning segment. Topologically, residues 39-376 (RNYIKRYFEF…RVHTGTCSCC (338 aa)) are lumenal. N-linked (GlcNAc...) asparagine glycans are attached at residues asparagine 56 and asparagine 96. 2 disulfides stabilise this stretch: cysteine 164–cysteine 313 and cysteine 178–cysteine 373. Residues asparagine 192 and 214 to 216 (NPS) each bind substrate. N-linked (GlcNAc...) asparagine glycosylation is found at asparagine 241 and asparagine 284. 300-302 (STG) lines the substrate pocket. Histidine 348 (proton donor/acceptor) is an active-site residue.

The protein belongs to the glycosyltransferase 29 family.

Its subcellular location is the golgi apparatus membrane. The enzyme catalyses a ganglioside GQ1c (d18:1(4E)) + CMP-N-acetyl-beta-neuraminate = a ganglioside GP1c (d18:1(4E)) + CMP + H(+). Its pathway is protein modification; protein glycosylation. In terms of biological role, involved in the synthesis of gangliosides GD1c, GT1a, GQ1b, GP1c and GT3 from GD1a, GT1b, GM1b and GD3 respectively. The protein is Alpha-2,8-sialyltransferase 8E (ST8SIA5) of Pan troglodytes (Chimpanzee).